Reading from the N-terminus, the 199-residue chain is Chaperone protein TorD (199 aa).

Belongs to the TorD/DmsD family. TorD subfamily.

The protein localises to the cytoplasm. In terms of biological role, involved in the biogenesis of TorA. Acts on TorA before the insertion of the molybdenum cofactor and, as a result, probably favors a conformation of the apoenzyme that is competent for acquiring the cofactor. The sequence is that of Chaperone protein TorD from Escherichia coli (strain ATCC 8739 / DSM 1576 / NBRC 3972 / NCIMB 8545 / WDCM 00012 / Crooks).